We begin with the raw amino-acid sequence, 444 residues long: 23S rRNA (uracil(1939)-C(5))-methyltransferase RlmD (444 aa).

In terms of domain architecture, TRAM spans 5-64 (KPKLNLTSQTARIVNLSHDGRGIARVNGKATFIQGALPGEVVEFQYTRIKKDFDEGKLLS). [4Fe-4S] cluster contacts are provided by Cys-77, Cys-83, Cys-86, and Cys-166. The S-adenosyl-L-methionine site is built by Gln-276, Phe-305, Asn-310, Glu-326, Asn-353, and Asp-374. Cys-400 acts as the Nucleophile in catalysis.

Belongs to the class I-like SAM-binding methyltransferase superfamily. RNA M5U methyltransferase family. RlmD subfamily.

The catalysed reaction is uridine(1939) in 23S rRNA + S-adenosyl-L-methionine = 5-methyluridine(1939) in 23S rRNA + S-adenosyl-L-homocysteine + H(+). Its function is as follows. Catalyzes the formation of 5-methyl-uridine at position 1939 (m5U1939) in 23S rRNA. The protein is 23S rRNA (uracil(1939)-C(5))-methyltransferase RlmD of Legionella pneumophila (strain Corby).